The chain runs to 326 residues: G-protein coupled receptor 1 (326 aa).

Residue serine 2 is modified to N-acetylserine. Residues 2 to 23 lie on the Extracellular side of the membrane; sequence SAVLTAGGGLTAGDRSIITAIN. Residues 24-44 traverse the membrane as a helical segment; the sequence is TGASSLSFVGSAFIVLCYCLF. Residues 45–51 are Cytoplasmic-facing; sequence KELRKFS. Residues 52-72 traverse the membrane as a helical segment; the sequence is FKLVFYLALSDMLCSFFLIVG. Residues 73 to 84 lie on the Extracellular side of the membrane; it reads DPSKGFICYAQG. A disulfide bridge connects residues cysteine 80 and cysteine 151. The chain crosses the membrane as a helical span at residues 85-105; that stretch reads YTTHFFCVASFLWTTTIAFTL. At 106–120 the chain is on the cytoplasmic side; sequence HRTVVKHKTDVEDLE. Residues 121–141 form a helical membrane-spanning segment; the sequence is AMFHLYVWGTSLVVTVIRSFG. Topologically, residues 142–160 are extracellular; it reads NNHSHLGPWCWTQTGLKGK. Asparagine 143 carries N-linked (GlcNAc...) asparagine glycosylation. A helical transmembrane segment spans residues 161–181; sequence AVHFLTFYAPLWGAILYNGFT. Residues 182–213 lie on the Cytoplasmic side of the membrane; the sequence is YFQVIRMLRNARRMAVGMSDRVDQFDNRAELK. A helical membrane pass occupies residues 214–234; that stretch reads VLNRWGYYPLILIGSWAFGTI. The Extracellular segment spans residues 235 to 246; sequence NRIHDFIEPGHK. The helical transmembrane segment at 247–267 threads the bilayer; sequence IFWLSVLDVGTAALMGLFNSI. At 268–326 the chain is on the cytoplasmic side; that stretch reads AYGFNSSVRRAIHERLELFLPERLYRWLPSNFRPKNHLILHQQQQQRSEMVSLKTEDQQ.

It belongs to the G-protein coupled receptor 2 family. As to quaternary structure, interacts with GPA1. In terms of tissue distribution, mostly present in the meristematic regions. Expressed at low levels in seedlings, vascular tissues of cotyledons, hypocotyl, and roots, stems, leaves, flowering buds and siliques. In dark-grown seedlings, localized in the cotyledons and the hook.

The protein localises to the cell membrane. Together with GPA1, may regulate the cell cycle via a signaling cascade that uses phosphatidylinositol-specific phospholipase C (PI-PLC) as an effector and inositol 1,4,5-trisphosphate(IP(3)) as a second messenger. Promotes PI-PLC activity and IP(3) accumulation. Involved in the blue light (BL) signaling. Together with GPA1 and ADT3, required for BL-mediated synthesis of phenylpyruvate and subsequently of phenylalanine (Phe), in etiolated seedlings. Probably involved in cytokinin signal transduction. Plays a positive role in gibberellin- (GA) and brassinosteroid- (BR) regulated seed germination, probably independently of a heterotrimeric G-protein. Mediates seed dormancy abolition, and promotes seed germination and flowering. The protein is G-protein coupled receptor 1 (GCR1) of Arabidopsis thaliana (Mouse-ear cress).